Here is a 599-residue protein sequence, read N- to C-terminus: Beta-(1--&gt;2)glucan export ATP-binding/permease protein NdvA (599 aa).

Positions 21 to 301 (TITMCVASVL…ISAFINQTVT (281 aa)) constitute an ABC transmembrane type-1 domain. 5 helical membrane-spanning segments follow: residues 22-42 (ITMC…PVLF), 55-75 (IFSP…AAVF), 156-176 (MRMS…GQLV), 248-268 (MAST…VTKG), and 276-296 (IAFI…SAFI). The ABC transporter domain occupies 335 to 569 (IVFDNVTYEF…GGRFSDLLRA (235 aa)). 368–375 (GPTGAGKT) contributes to the ATP binding site.

Belongs to the ABC transporter superfamily. Beta-(1--&gt;2)glucan exporter (TC 3.A.1.108.1) family. As to quaternary structure, homodimer.

Its subcellular location is the cell inner membrane. It carries out the reaction [(1-&gt;2)-beta-D-glucosyl](n)(in) + ATP + H2O = [(1-&gt;2)-beta-D-glucosyl](n)(out) + ADP + phosphate + H(+). Its function is as follows. Involved in beta-(1--&gt;2)glucan export. Transmembrane domains (TMD) form a pore in the inner membrane and the ATP-binding domain (NBD) is responsible for energy generation. This is Beta-(1--&gt;2)glucan export ATP-binding/permease protein NdvA from Brucella melitensis biotype 1 (strain ATCC 23456 / CCUG 17765 / NCTC 10094 / 16M).